Consider the following 1147-residue polypeptide: PDZ domain-containing protein 8 (1147 aa).

The chain crosses the membrane as a helical span at residues 2 to 24; the sequence is GLLLLILASAVLGSFLTLLAQFL. Positions 87–293 constitute an SMP-LTD domain; it reads APPTLETCYF…LPSYKIRFKP (207 aa). Residues 365–448 form the PDZ domain; that stretch reads TVELIKGNLQ…RVLVYYQRPA (84 aa). Residues Ser-490, Ser-515, and Ser-532 each carry the phosphoserine modification. The tract at residues 504–673 is disordered; the sequence is ELKEETQPLS…DSSDDPQMWE (170 aa). Positions 510 to 524 are enriched in polar residues; the sequence is QPLSHSPKRTPTTLS. Over residues 557–576 the composition is skewed to polar residues; it reads KPSTLKTSETTEAAQVSKPQ. Residues 580-596 show a composition bias toward pro residues; the sequence is FKPPVPPRPQGRVPLPP. A Phorbol-ester/DAG-type zinc finger spans residues 833–884; sequence KHSFQDTQFQNPTWCDYCKKKVWTKAASQCMFCAYVCHKKCQEKCLAETPLC. Positions 948–990 are disordered; it reads RLSEPGTDLVEPSPKHTPNTSDNEGSDTEVCGSNSPSKRGNSA. A phosphoserine mark is found at Ser-960 and Ser-973. The span at 978-987 shows a compositional bias: polar residues; it reads CGSNSPSKRG. The stretch at 1021–1056 forms a coiled coil; that stretch reads PTEERIQKLEFMLDKLQNEIDQELEHNNSLVREEKE. Positions 1126–1137 are enriched in polar residues; that stretch reads QLIDSQPFSNIS. The segment at 1126-1147 is disordered; it reads QLIDSQPFSNISDDLFGPSESV.

Interacts with MSN.

The protein localises to the endoplasmic reticulum membrane. In terms of biological role, molecular tethering protein that connects endoplasmic reticulum and mitochondria membranes. PDZD8-dependent endoplasmic reticulum-mitochondria membrane tethering is essential for endoplasmic reticulum-mitochondria Ca(2+) transfer. In neurons, involved in the regulation of dendritic Ca(2+) dynamics by regulating mitochondrial Ca(2+) uptake in neurons. The chain is PDZ domain-containing protein 8 from Mus musculus (Mouse).